Consider the following 1082-residue polypeptide: SURP and G-patch domain-containing protein 2 (1082 aa).

Position 7 is a phosphothreonine (threonine 7). The interval 65-97 is disordered; that stretch reads LSGSVAHSRDAGREGLRSDVFPGPSFRSSNPSI. Over residues 71–81 the composition is skewed to basic and acidic residues; that stretch reads HSRDAGREGLR. Phosphoserine occurs at positions 96 and 224. Lysine 228 is covalently cross-linked (Glycyl lysine isopeptide (Lys-Gly) (interchain with G-Cter in SUMO2)). Threonine 275 is subject to Phosphothreonine. At serine 277 the chain carries Phosphoserine. Residue lysine 305 forms a Glycyl lysine isopeptide (Lys-Gly) (interchain with G-Cter in SUMO2) linkage. 3 positions are modified to phosphoserine: serine 315, serine 573, and serine 603. Residues 590–633 form an SURP motif 1 repeat; the sequence is IDQLVKRVIEGSLSPKERTLLKEDPAYWFLSDENSLEYKYYKLK. A Glycyl lysine isopeptide (Lys-Gly) (interchain with G-Cter in SUMO2) cross-link involves residue lysine 650. Positions 694–779 are disordered; it reads RRATTGTQTL…QTSSPCPSAD (86 aa). Low complexity predominate over residues 697-708; that stretch reads TTGTQTLLSSGT. Basic and acidic residues predominate over residues 727-738; the sequence is LPDRNDAAKDCP. Residues serine 754 and serine 757 each carry the phosphoserine modification. An SURP motif 2 repeat occupies 787-830; that stretch reads TAEKLARFVAQVGPEIEQFSIENSTDNPDLWFLHDQNSSAFKFY. Disordered regions lie at residues 849–930, 982–1002, and 1030–1061; these read NLHT…EAAE, RIAY…PKDL, and LGSL…EHKE. At serine 863 the chain carries Phosphoserine. 2 stretches are compositionally biased toward acidic residues: residues 868-877 and 885-904; these read MEGEAEFEDE and LESP…DGGE. Over residues 990 to 999 the composition is skewed to basic residues; the sequence is GRPMSKKKKP. The short motif at 995–1000 is the Nuclear localization signal element; sequence KKKKPK. A G-patch domain is found at 1011–1057; sequence DKNLGFQMLQKMGWKEGHGLGSLGKGIREPVSVGTPSEGEGLGADGQ.

Detected in adult testis, and in fetal brain and kidney.

It localises to the nucleus. May play a role in mRNA splicing. This Homo sapiens (Human) protein is SURP and G-patch domain-containing protein 2 (SUGP2).